A 94-amino-acid polypeptide reads, in one-letter code: Alpha-conotoxin-like Cp20.2 (94 aa).

The first 24 residues, 1–24 (MPKLAVVLLVLLILPLSYFDAAGG), serve as a signal peptide directing secretion. The propeptide occupies 25–45 (QAVQWDRRGNGLARYLQRGDR). 4 disulfide bridges follow: C63–C72, C68–C80, C73–C90, and C78–C92.

The protein belongs to the conotoxin D superfamily. As to quaternary structure, hetero-, homo- or pseudo-homodimer (identical sequence, different post-translational modifications). As to expression, expressed by the venom duct.

The protein localises to the secreted. Alpha-conotoxins act on postsynaptic membranes, they bind to the nicotinic acetylcholine receptors (nAChR) and thus inhibit them. Through its two C-terminal domains, this homodimeric protein would bind to two nAChR allosteric sites, located outside the nAChR C-loop of the principal binding face and at the adjacent binding interface in a clockwise direction. This toxin specifically blocks mammalian neuronal nAChR of the alpha-7/CHRNA7, alpha-3-beta-2/CHRNA3-CHRNB2 and alpha-4-beta-2/CHRNA4-CHRNB2 subtypes. The protein is Alpha-conotoxin-like Cp20.2 of Conus capitaneus (Captain cone).